The sequence spans 289 residues: Polyamine aminopropyltransferase (289 aa).

The PABS domain occupies Pro5–Leu245. Residue Gln36 coordinates S-methyl-5'-thioadenosine. Spermidine contacts are provided by His67 and Glu91. S-methyl-5'-thioadenosine-binding positions include Asp111 and Asp143–Gly144. The Proton acceptor role is filled by Asp164.

It belongs to the spermidine/spermine synthase family. Homodimer or homotetramer.

The protein resides in the cytoplasm. It catalyses the reaction S-adenosyl 3-(methylsulfanyl)propylamine + putrescine = S-methyl-5'-thioadenosine + spermidine + H(+). It participates in amine and polyamine biosynthesis; spermidine biosynthesis; spermidine from putrescine: step 1/1. Functionally, catalyzes the irreversible transfer of a propylamine group from the amino donor S-adenosylmethioninamine (decarboxy-AdoMet) to putrescine (1,4-diaminobutane) to yield spermidine. This is Polyamine aminopropyltransferase from Pyrobaculum calidifontis (strain DSM 21063 / JCM 11548 / VA1).